The primary structure comprises 105 residues: Large ribosomal subunit protein eL36 (105 aa).

Residues 1-36 (MAQERSGIAVGLNKGHKTTPLNTPKTRISRSKGKAS) are disordered. A compositionally biased stretch (basic residues) spans 27-36 (RISRSKGKAS).

Belongs to the eukaryotic ribosomal protein eL36 family. In terms of assembly, component of the large ribosomal subunit (LSU).

It localises to the cytoplasm. In terms of biological role, component of the ribosome, a large ribonucleoprotein complex responsible for the synthesis of proteins in the cell. The small ribosomal subunit (SSU) binds messenger RNAs (mRNAs) and translates the encoded message by selecting cognate aminoacyl-transfer RNA (tRNA) molecules. The large subunit (LSU) contains the ribosomal catalytic site termed the peptidyl transferase center (PTC), which catalyzes the formation of peptide bonds, thereby polymerizing the amino acids delivered by tRNAs into a polypeptide chain. The nascent polypeptides leave the ribosome through a tunnel in the LSU and interact with protein factors that function in enzymatic processing, targeting, and the membrane insertion of nascent chains at the exit of the ribosomal tunnel. The sequence is that of Large ribosomal subunit protein eL36 from Emericella nidulans (strain FGSC A4 / ATCC 38163 / CBS 112.46 / NRRL 194 / M139) (Aspergillus nidulans).